The following is a 455-amino-acid chain: Beta-1,3-galactosyl-O-glycosyl-glycoprotein beta-1,6-N-acetylglucosaminyltransferase 4 (455 aa).

Topologically, residues 1 to 13 (MKIFRCCFKYTLQ) are cytoplasmic. The helical; Signal-anchor for type II membrane protein transmembrane segment at 14–34 (QKLFILLLTLWLFSLLKLLNV) threads the bilayer. Residues 35-455 (GRLLFPQRDI…TEGTRQSHTL (421 aa)) are Lumenal-facing. N-linked (GlcNAc...) asparagine glycosylation is present at N73. Intrachain disulfides connect C74/C228, C162/C383, C183/C210, and C392/C424. N-linked (GlcNAc...) asparagine glycans are attached at residues N287 and N382.

Belongs to the glycosyltransferase 14 family.

Its subcellular location is the golgi apparatus membrane. The enzyme catalyses a 3-O-[beta-D-galactosyl-(1-&gt;3)-N-acetyl-alpha-D-galactosaminyl]-L-seryl-[protein] + UDP-N-acetyl-alpha-D-glucosamine = 3-O-{beta-D-galactosyl-(1-&gt;3)-[N-acetyl-beta-D-glucosaminyl-(1-&gt;6)]-N-acetyl-alpha-D-galactosaminyl}-L-seryl-[protein] + UDP + H(+). The catalysed reaction is a 3-O-[beta-D-galactosyl-(1-&gt;3)-N-acetyl-alpha-D-galactosaminyl]-L-threonyl-[protein] + UDP-N-acetyl-alpha-D-glucosamine = a 3-O-{beta-D-galactosyl-(1-&gt;3)-[N-acetyl-beta-D-glucosaminyl-(1-&gt;6)]-N-acetyl-alpha-D-galactosaminyl}-L-threonyl-[protein] + UDP + H(+). It functions in the pathway protein modification; protein glycosylation. In terms of biological role, glycosyltransferase that mediates core 2 O-glycan branching, an important step in mucin-type biosynthesis. Does not have core 4 O-glycan or I-branching enzyme activity. This is Beta-1,3-galactosyl-O-glycosyl-glycoprotein beta-1,6-N-acetylglucosaminyltransferase 4 (Gcnt4) from Mus musculus (Mouse).